The sequence spans 267 residues: Outer membrane protein assembly factor BamD (267 aa).

Positions M1–A16 are cleaved as a signal peptide. C17 is lipidated: N-palmitoyl cysteine. The S-diacylglycerol cysteine moiety is linked to residue C17.

The protein belongs to the BamD family. As to quaternary structure, part of the Bam complex.

Its subcellular location is the cell outer membrane. Part of the outer membrane protein assembly complex, which is involved in assembly and insertion of beta-barrel proteins into the outer membrane. Required for efficient transformation of Neisseria meningitidis by species-related DNA. The sequence is that of Outer membrane protein assembly factor BamD from Neisseria meningitidis serogroup B (strain ATCC BAA-335 / MC58).